Reading from the N-terminus, the 305-residue chain is NAD kinase (305 aa).

Residue Asp-76 is the Proton acceptor of the active site. NAD(+) is bound by residues 76–77 (DG), 150–151 (ND), Arg-161, and Asp-180.

It belongs to the NAD kinase family. Requires a divalent metal cation as cofactor.

The protein resides in the cytoplasm. It carries out the reaction NAD(+) + ATP = ADP + NADP(+) + H(+). Involved in the regulation of the intracellular balance of NAD and NADP, and is a key enzyme in the biosynthesis of NADP. Catalyzes specifically the phosphorylation on 2'-hydroxyl of the adenosine moiety of NAD to yield NADP. The chain is NAD kinase from Treponema pallidum (strain Nichols).